A 201-amino-acid chain; its full sequence is Ribosome maturation factor RimM (201 aa).

Residues 92 to 166 form the PRC barrel domain; that stretch reads DEDEFYHADL…RVVVEPPANF (75 aa). A disordered region spans residues 169–201; that stretch reads PAGPQPAEGEEMPDGALEALEGEEAGAGTAPQP.

Belongs to the RimM family. Binds ribosomal protein uS19.

It is found in the cytoplasm. An accessory protein needed during the final step in the assembly of 30S ribosomal subunit, possibly for assembly of the head region. Essential for efficient processing of 16S rRNA. May be needed both before and after RbfA during the maturation of 16S rRNA. It has affinity for free ribosomal 30S subunits but not for 70S ribosomes. This Rhodospirillum centenum (strain ATCC 51521 / SW) protein is Ribosome maturation factor RimM.